The chain runs to 412 residues: Isocitrate dehydrogenase [NADP] (412 aa).

Thr-100 serves as a coordination point for NADP(+). Positions 109, 111, 115, 125, and 149 each coordinate D-threo-isocitrate. A Mg(2+)-binding site is contributed by Asp-301. NADP(+)-binding positions include His-333–Tyr-339, Asn-346, Tyr-385, and Arg-389.

Belongs to the isocitrate and isopropylmalate dehydrogenases family. In terms of assembly, homodimer. Requires Mg(2+) as cofactor. Mn(2+) serves as cofactor.

It catalyses the reaction D-threo-isocitrate + NADP(+) = 2-oxoglutarate + CO2 + NADPH. In terms of biological role, catalyzes the oxidative decarboxylation of isocitrate to 2-oxoglutarate and carbon dioxide with the concomitant reduction of NADP(+). NAD(+) can replace NADP(+) with low efficiency. In Archaeoglobus fulgidus (strain ATCC 49558 / DSM 4304 / JCM 9628 / NBRC 100126 / VC-16), this protein is Isocitrate dehydrogenase [NADP].